The sequence spans 81 residues: Toxin MIT1 (81 aa).

5 cysteine pairs are disulfide-bonded: Cys-7/Cys-19, Cys-13/Cys-31, Cys-18/Cys-59, Cys-41/Cys-67, and Cys-61/Cys-77.

The protein belongs to the AVIT (prokineticin) family. Expressed by the venom gland.

It is found in the secreted. Potent agonist for both PKR1/PROKR1 and PKR2/PROKR2. Potently contracts gastrointestinal (GI) smooth muscle. The sequence is that of Toxin MIT1 from Dendroaspis polylepis polylepis (Black mamba).